A 162-amino-acid chain; its full sequence is Phosphopantetheine adenylyltransferase (162 aa).

Ser9 provides a ligand contact to substrate. Residues 9 to 10 (SF) and His17 contribute to the ATP site. Residues Lys41, Leu73, and Lys87 each coordinate substrate. Residues 88-90 (GLR), Glu98, and 122-128 (YSFLSSS) each bind ATP.

It belongs to the bacterial CoaD family. Homohexamer. Mg(2+) serves as cofactor.

The protein localises to the cytoplasm. It carries out the reaction (R)-4'-phosphopantetheine + ATP + H(+) = 3'-dephospho-CoA + diphosphate. It functions in the pathway cofactor biosynthesis; coenzyme A biosynthesis; CoA from (R)-pantothenate: step 4/5. In terms of biological role, reversibly transfers an adenylyl group from ATP to 4'-phosphopantetheine, yielding dephospho-CoA (dPCoA) and pyrophosphate. This chain is Phosphopantetheine adenylyltransferase, found in Salinispora tropica (strain ATCC BAA-916 / DSM 44818 / JCM 13857 / NBRC 105044 / CNB-440).